We begin with the raw amino-acid sequence, 704 residues long: Polyribonucleotide nucleotidyltransferase (704 aa).

Mg(2+) is bound by residues aspartate 487 and aspartate 493. One can recognise a KH domain in the interval 554 to 613 (PRLLTIKIHPDKIREVIGKGGSTIQAITKETGTQIDIQDDGTIIIASVNAIAAQAAKSRI). The S1 motif domain occupies 623-691 (GRIYEGKVAK…KQGRIRLSIK (69 aa)).

The protein belongs to the polyribonucleotide nucleotidyltransferase family. Component of the RNA degradosome, which is a multiprotein complex involved in RNA processing and mRNA degradation. It depends on Mg(2+) as a cofactor.

The protein localises to the cytoplasm. It carries out the reaction RNA(n+1) + phosphate = RNA(n) + a ribonucleoside 5'-diphosphate. Functionally, involved in mRNA degradation. Catalyzes the phosphorolysis of single-stranded polyribonucleotides processively in the 3'- to 5'-direction. The protein is Polyribonucleotide nucleotidyltransferase of Xanthomonas campestris pv. campestris (strain 8004).